Here is a 371-residue protein sequence, read N- to C-terminus: Cytochrome b (371 aa).

A run of 4 helical transmembrane segments spans residues 25 to 45, 69 to 90, 105 to 125, and 170 to 190; these read FGSMLLTCLMLQVLTGFFLAV, WLMQNLHAIGASMFFICIYIHI, WMSGITLLITLIATAFFGYVL, and FFALHFILPFAIISLSSLHII. 2 residues coordinate heme b: His75 and His89. Heme b is bound by residues His174 and His188. Residue His193 coordinates a ubiquinone. Helical transmembrane passes span 218–238, 280–300, 312–332, and 339–358; these read YKDLLLLTLMLLTLMITVSFF, LGGALALVMSIMILLTAPLTH, LSQLMFWTLISTFITITWAAT, and YIIISQTTATLYFTFFISTP.

This sequence belongs to the cytochrome b family. The cytochrome bc1 complex contains 3 respiratory subunits (MT-CYB, CYC1 and UQCRFS1), 2 core proteins (UQCRC1 and UQCRC2) and probably 6 low-molecular weight proteins. It depends on heme b as a cofactor.

The protein resides in the mitochondrion inner membrane. In terms of biological role, component of the ubiquinol-cytochrome c reductase complex (complex III or cytochrome b-c1 complex) that is part of the mitochondrial respiratory chain. The b-c1 complex mediates electron transfer from ubiquinol to cytochrome c. Contributes to the generation of a proton gradient across the mitochondrial membrane that is then used for ATP synthesis. The protein is Cytochrome b (MT-CYB) of Python regius (Ball python).